The primary structure comprises 82 residues: Putative defensin-like protein 48 (82 aa).

The signal sequence occupies residues methionine 1–glycine 28. Disulfide bonds link cysteine 39/cysteine 80, cysteine 43/cysteine 67, cysteine 53/cysteine 78, and cysteine 57/cysteine 79.

The protein belongs to the DEFL family.

The protein resides in the secreted. This chain is Putative defensin-like protein 48, found in Arabidopsis thaliana (Mouse-ear cress).